Reading from the N-terminus, the 284-residue chain is Trimeric intracellular cation channel type B-A (284 aa).

Topologically, residues 1 to 15 are lumenal; it reads MESLSELSVQFSQLS. The helical transmembrane segment at 16-33 threads the bilayer; the sequence is MFPFFDMAHYVVSVMSAR. Topologically, residues 34-46 are cytoplasmic; that stretch reads EQAGALDIAARSP. The chain crosses the membrane as a helical span at residues 47–68; the sequence is MASWFSAMLYCFGGGILSSILL. The Lumenal portion of the chain corresponds to 69-79; that stretch reads AEPPIAVLSNT. A helical transmembrane segment spans residues 80–99; sequence TNIMLASTIWYMVYYFPYDL. The Cytoplasmic portion of the chain corresponds to 100-102; the sequence is FYN. Residues 103 to 121 traverse the membrane as a helical segment; that stretch reads CFFFLPIRLIIAGMKEVTR. 2 residues coordinate a 1,2-diacyl-sn-glycero-3-phospho-(1D-myo-inositol-4,5-bisphosphate): lysine 117 and arginine 121. Residues 122-137 are Lumenal-facing; sequence TWKILSGVTHAHSHYK. The helical transmembrane segment at 138 to 155 threads the bilayer; sequence DALLVMITIGWARGAGGG. Topologically, residues 156 to 177 are cytoplasmic; that stretch reads LISNFEQLVRGVWKPESNEFLK. A helical membrane pass occupies residues 178–195; sequence MSYPVKVTLIGAVLFTLQ. At 196 to 206 the chain is on the lumenal side; the sequence is HGHYLPISRHN. A helical membrane pass occupies residues 207–224; that stretch reads LMLIYTMFLVLIKVTMML. Residues 225–284 lie on the Cytoplasmic side of the membrane; it reads THSTASPFLPLETPLQRILFGQRQKPSEVRQSASSSGAKGKPSKKTLDKDSGEQSKKKDS. The segment at 246–284 is disordered; it reads QRQKPSEVRQSASSSGAKGKPSKKTLDKDSGEQSKKKDS. Residues 269–284 are compositionally biased toward basic and acidic residues; sequence KTLDKDSGEQSKKKDS.

It belongs to the TMEM38 family. In terms of assembly, homotrimer; conformation seems to be controled by binding to diacylglycerol (DAG).

The protein localises to the endoplasmic reticulum membrane. The catalysed reaction is K(+)(in) = K(+)(out). Its activity is regulated as follows. Channel activity is activated by increased cytosolic Ca(2+) levels and blocked by luminal high Ca(2+) levels. Its function is as follows. Intracellular monovalent cation channel required for maintenance of rapid intracellular calcium release. Acts as a potassium counter-ion channel that functions in synchronization with calcium release from intracellular stores. Activated by increased cytosolic Ca(2+) levels. In Xenopus laevis (African clawed frog), this protein is Trimeric intracellular cation channel type B-A (tmem38b-a).